Here is a 356-residue protein sequence, read N- to C-terminus: MSGQSSWRRAATVMLAAGWTHSSPAGFRLLLLQRAQNQRFLPGAHVFPGGVLDAADSSPDWVRLFAPRHTPPRFGLGPEPPRQPPFPGLSHGDADPAALPDDVALRICAIRETFEEAGVLLLRPRDAPASQEPSQALSPPAGLAEWRSRVRSDPRCFLQLCAHLDCTPDIWALHDWGGWLTPYGRSLRRFDTTFLLCCLRDTPRVEPDLAEVVGYQWLSPSEATECFLSKEIWLAPPQFYEMRRLENFASLSALYRFCSDRPLEVAQKWLPIILVTSDGSVHLLPGDELYVKDSDFLEKNMSTDKKTEEIMKEGKVLNRIVIRSPYVYEIYVTLPSENKHVFPRNYIVNKSRTARL.

Residues 10–241 (AATVMLAAGW…IWLAPPQFYE (232 aa)) form the Nudix hydrolase domain. The tract at residues 72–94 (PRFGLGPEPPRQPPFPGLSHGDA) is disordered. Residues 78 to 87 (PEPPRQPPFP) show a composition bias toward pro residues. Positions 97-118 (AALPDDVALRICAIRETFEEAG) match the Nudix box motif. Residues E112 and E116 each coordinate Mg(2+). An N6-succinyllysine modification is found at K299. Residues 354–356 (ARL) carry the Microbody targeting signal motif.

This sequence belongs to the Nudix hydrolase family. In terms of assembly, monomer. Mg(2+) serves as cofactor. It depends on Mn(2+) as a cofactor.

It localises to the peroxisome. The enzyme catalyses an acyl-CoA + H2O = an acyl-4'-phosphopantetheine + adenosine 3',5'-bisphosphate + 2 H(+). The catalysed reaction is CoA + H2O = (R)-4'-phosphopantetheine + adenosine 3',5'-bisphosphate + 2 H(+). It carries out the reaction hexanoyl-CoA + H2O = hexanoyl-4'-phosphopantetheine + adenosine 3',5'-bisphosphate + 2 H(+). It catalyses the reaction octanoyl-CoA + H2O = S-octanoyl-4'-phosphopantetheine + adenosine 3',5'-bisphosphate + 2 H(+). The enzyme catalyses butanoyl-CoA + H2O = S-butanoyl-4'-phosphopantetheine + adenosine 3',5'-bisphosphate + 2 H(+). The catalysed reaction is propanoyl-CoA + H2O = propanoyl-4'-phosphopantetheine + adenosine 3',5'-bisphosphate + 2 H(+). It carries out the reaction malonyl-CoA + H2O = malonyl-4'-phosphopantetheine + adenosine 3',5'-bisphosphate + 2 H(+). It catalyses the reaction succinyl-CoA + H2O = succinyl-4'-phosphopantetheine + adenosine 3',5'-bisphosphate + 2 H(+). The enzyme catalyses choloyl-CoA + H2O = S-choloyl-4'-phosphopantetheine + adenosine 3',5'-bisphosphate + 2 H(+). The catalysed reaction is 4,8-dimethylnonanoyl-CoA + H2O = S-(4,8-dimethylnonanoyl)-4'-phosphopantetheine + adenosine 3',5'-bisphosphate + 2 H(+). It carries out the reaction (9Z,12Z,15Z)-octadecatrienoyl-CoA + H2O = S-(9Z,12Z,15Z-octadecatrienoyl)-4'-phosphopantetheine + adenosine 3',5'-bisphosphate + 2 H(+). It catalyses the reaction (9Z,12Z)-octadecadienoyl-CoA + H2O = S-(9Z,12Z-octadecadienoyl)-4'-phosphopantetheine + adenosine 3',5'-bisphosphate + 2 H(+). The enzyme catalyses (9Z)-hexadecenoyl-CoA + H2O = S-(9Z-hexadecenoyl)-4'-phosphopantetheine + adenosine 3',5'-bisphosphate + 2 H(+). The catalysed reaction is (9Z)-tetradecenoyl-CoA + H2O = S-(9Z-tetradecenoyl)-4'-phosphopantetheine + adenosine 3',5'-bisphosphate + 2 H(+). It carries out the reaction (6Z)-octenoyl-CoA + H2O = S-(6Z-octenoyl)-4'-phosphopantetheine + adenosine 3',5'-bisphosphate + 2 H(+). It catalyses the reaction hexadecanoyl-CoA + H2O = S-hexadecanoyl-4'-phosphopantetheine + adenosine 3',5'-bisphosphate + 2 H(+). The enzyme catalyses tetradecanoyl-CoA + H2O = tetradecanoyl-4'-phosphopantetheine + adenosine 3',5'-bisphosphate + 2 H(+). The catalysed reaction is dodecanoyl-CoA + H2O = S-dodecanoyl-4'-phosphopantetheine + adenosine 3',5'-bisphosphate + 2 H(+). It carries out the reaction a 5'-end CoA-ribonucleoside in mRNA + H2O = a 5'-end phospho-adenosine-phospho-ribonucleoside in mRNA + (R)-4'-phosphopantetheine + 2 H(+). In terms of biological role, fatty acyl-coenzyme A (CoA) diphosphatase that hydrolyzes fatty acyl-CoA to yield acyl-4'-phosphopantetheine and adenosine 3',5'-bisphosphate. Mediates the hydrolysis of a wide range of CoA esters, including choloyl-CoA and branched-chain fatty-acyl-CoA esters and at low substrate concentrations medium and long-chain fatty-acyl-CoA esters are the primary substrates. Highest activity seen with medium-chain acyl-CoA esters and higher rates of activity seen with the unsaturated acyl-CoA esters compared with the saturated esters. Exhibits decapping activity towards dpCoA-capped RNAs in vitro. The chain is Acyl-coenzyme A diphosphatase NUDT19 (Nudt19) from Mus saxicola (Brown spiny mouse).